The following is a 272-amino-acid chain: uncharacterized protein (272 aa).

It belongs to the sodium:galactoside symporter (TC 2.A.2) family.

This is an uncharacterized protein from Pseudescherichia vulneris (Escherichia vulneris).